A 138-amino-acid polypeptide reads, in one-letter code: Transcriptional activator protein Pur-alpha (138 aa).

S70 is subject to Phosphoserine.

Belongs to the PUR DNA-binding protein family. Homodimer, heterodimer with PURB and heterotrimer with PURB and YBX1/Y-box protein 1. Interacts with FMR1; this interaction occurs in association with polyribosome.

The protein localises to the nucleus. Its function is as follows. This is a probable transcription activator that specifically binds the purine-rich single strand of the PUR element located upstream of the c-Myc gene. May play a role in the initiation of DNA replication and in recombination. This Rattus norvegicus (Rat) protein is Transcriptional activator protein Pur-alpha.